Reading from the N-terminus, the 426-residue chain is Serine--tRNA ligase (426 aa).

233-235 (TSE) is a binding site for L-serine. 264–266 (RSE) contributes to the ATP binding site. An L-serine-binding site is contributed by E287. 351–354 (EISS) provides a ligand contact to ATP. L-serine is bound at residue S387.

The protein belongs to the class-II aminoacyl-tRNA synthetase family. Type-1 seryl-tRNA synthetase subfamily. In terms of assembly, homodimer. The tRNA molecule binds across the dimer.

Its subcellular location is the cytoplasm. The catalysed reaction is tRNA(Ser) + L-serine + ATP = L-seryl-tRNA(Ser) + AMP + diphosphate + H(+). It carries out the reaction tRNA(Sec) + L-serine + ATP = L-seryl-tRNA(Sec) + AMP + diphosphate + H(+). Its pathway is aminoacyl-tRNA biosynthesis; selenocysteinyl-tRNA(Sec) biosynthesis; L-seryl-tRNA(Sec) from L-serine and tRNA(Sec): step 1/1. Functionally, catalyzes the attachment of serine to tRNA(Ser). Is also able to aminoacylate tRNA(Sec) with serine, to form the misacylated tRNA L-seryl-tRNA(Sec), which will be further converted into selenocysteinyl-tRNA(Sec). This chain is Serine--tRNA ligase, found in Xylella fastidiosa (strain M12).